Reading from the N-terminus, the 318-residue chain is uncharacterized protein (318 aa).

Residues 67 to 157 (LAFDELEKEK…SLKAIQTSQE (91 aa)) adopt a coiled-coil conformation. Residues 172–318 (ESTNKVEKNA…KGFFARLFNL (147 aa)) are disordered. Basic and acidic residues-rich tracts occupy residues 175-193 (NKVEKNAVTEDKADSKDSK) and 219-236 (KVDKEDQISATEAIEKAS). Positions 237–248 (VEQSKNGNAAET) are enriched in polar residues. Composition is skewed to basic and acidic residues over residues 249-274 (SNKEATIDAEAQHDAEQQVAEAHAEA) and 300-310 (SEPKPQEEKKG).

This is an uncharacterized protein from Staphylococcus aureus (strain MW2).